The chain runs to 269 residues: Protein-L-isoaspartate O-methyltransferase (269 aa).

The disordered stretch occupies residues 1-53 (MSAGQRPAPKFPLRLDQVKPAGRSGAAPLLRPQRPLHQAATERGRGTTPAGLG). S113 is an active-site residue.

It belongs to the methyltransferase superfamily. L-isoaspartyl/D-aspartyl protein methyltransferase family.

The protein localises to the cytoplasm. The enzyme catalyses [protein]-L-isoaspartate + S-adenosyl-L-methionine = [protein]-L-isoaspartate alpha-methyl ester + S-adenosyl-L-homocysteine. Functionally, catalyzes the methyl esterification of L-isoaspartyl residues in peptides and proteins that result from spontaneous decomposition of normal L-aspartyl and L-asparaginyl residues. It plays a role in the repair and/or degradation of damaged proteins. The polypeptide is Protein-L-isoaspartate O-methyltransferase (Methylibium petroleiphilum (strain ATCC BAA-1232 / LMG 22953 / PM1)).